Reading from the N-terminus, the 360-residue chain is UDP-N-acetylglucosamine--N-acetylmuramyl-(pentapeptide) pyrophosphoryl-undecaprenol N-acetylglucosamine transferase (360 aa).

Residues 17 to 19 (TAG), Asn-130, Arg-166, Ser-200, Ile-247, and Gln-291 contribute to the UDP-N-acetyl-alpha-D-glucosamine site.

Belongs to the glycosyltransferase 28 family. MurG subfamily.

It localises to the cell membrane. The enzyme catalyses di-trans,octa-cis-undecaprenyl diphospho-N-acetyl-alpha-D-muramoyl-L-alanyl-D-glutamyl-meso-2,6-diaminopimeloyl-D-alanyl-D-alanine + UDP-N-acetyl-alpha-D-glucosamine = di-trans,octa-cis-undecaprenyl diphospho-[N-acetyl-alpha-D-glucosaminyl-(1-&gt;4)]-N-acetyl-alpha-D-muramoyl-L-alanyl-D-glutamyl-meso-2,6-diaminopimeloyl-D-alanyl-D-alanine + UDP + H(+). It participates in cell wall biogenesis; peptidoglycan biosynthesis. In terms of biological role, cell wall formation. Catalyzes the transfer of a GlcNAc subunit on undecaprenyl-pyrophosphoryl-MurNAc-pentapeptide (lipid intermediate I) to form undecaprenyl-pyrophosphoryl-MurNAc-(pentapeptide)GlcNAc (lipid intermediate II). The sequence is that of UDP-N-acetylglucosamine--N-acetylmuramyl-(pentapeptide) pyrophosphoryl-undecaprenol N-acetylglucosamine transferase from Corynebacterium efficiens (strain DSM 44549 / YS-314 / AJ 12310 / JCM 11189 / NBRC 100395).